A 268-amino-acid chain; its full sequence is Tryptophan synthase alpha chain (268 aa).

Catalysis depends on proton acceptor residues Glu-49 and Asp-60.

Belongs to the TrpA family. As to quaternary structure, tetramer of two alpha and two beta chains.

The catalysed reaction is (1S,2R)-1-C-(indol-3-yl)glycerol 3-phosphate + L-serine = D-glyceraldehyde 3-phosphate + L-tryptophan + H2O. The protein operates within amino-acid biosynthesis; L-tryptophan biosynthesis; L-tryptophan from chorismate: step 5/5. Functionally, the alpha subunit is responsible for the aldol cleavage of indoleglycerol phosphate to indole and glyceraldehyde 3-phosphate. This Haemophilus influenzae (strain PittGG) protein is Tryptophan synthase alpha chain.